A 431-amino-acid chain; its full sequence is tRNA(Ile)-lysidine synthase (431 aa).

Residue 19 to 24 (STGIDS) participates in ATP binding.

Belongs to the tRNA(Ile)-lysidine synthase family.

It localises to the cytoplasm. It carries out the reaction cytidine(34) in tRNA(Ile2) + L-lysine + ATP = lysidine(34) in tRNA(Ile2) + AMP + diphosphate + H(+). In terms of biological role, ligates lysine onto the cytidine present at position 34 of the AUA codon-specific tRNA(Ile) that contains the anticodon CAU, in an ATP-dependent manner. Cytidine is converted to lysidine, thus changing the amino acid specificity of the tRNA from methionine to isoleucine. This Staphylococcus aureus (strain MRSA252) protein is tRNA(Ile)-lysidine synthase.